Here is a 77-residue protein sequence, read N- to C-terminus: MKEQKWIHEGLITESLPNGMFRVRLDNEDMILGYVSGKIRRSFIRILPGDRVKIEVSRYDSTRGRIIYRLRNKDSKD.

The 71-residue stretch at 1–71 (MKEQKWIHEG…TRGRIIYRLR (71 aa)) folds into the S1-like domain.

This sequence belongs to the IF-1 family. Component of the 30S ribosomal translation pre-initiation complex which assembles on the 30S ribosome in the order IF-2 and IF-3, IF-1 and N-formylmethionyl-tRNA(fMet); mRNA recruitment can occur at any time during PIC assembly.

It is found in the plastid. The protein localises to the chloroplast. Its function is as follows. One of the essential components for the initiation of protein synthesis. Stabilizes the binding of IF-2 and IF-3 on the 30S subunit to which N-formylmethionyl-tRNA(fMet) subsequently binds. Helps modulate mRNA selection, yielding the 30S pre-initiation complex (PIC). Upon addition of the 50S ribosomal subunit IF-1, IF-2 and IF-3 are released leaving the mature 70S translation initiation complex. This is Translation initiation factor IF-1, chloroplastic from Lactuca sativa (Garden lettuce).